The following is a 288-amino-acid chain: N-acetyltransferase ECO1 (288 aa).

The tract at residues 1–50 (MKRDITQLLSPELSQSSSRNDKKRKPTNSNKKVQTVLNFPSSSPNASQST) is disordered. Residues 7-18 (QLLSPELSQSSS) show a composition bias toward low complexity. Residues 27 to 50 (TNSNKKVQTVLNFPSSSPNASQST) are compositionally biased toward polar residues. Residues 50–74 (TTCPTCGMTYYSHVSKDNDVHNKYH) form a CCHH-type zinc finger.

Belongs to the acetyltransferase family. ECO subfamily.

Its subcellular location is the nucleus. Its function is as follows. Probable acetyltransferase required for the establishment of sister chromatid cohesion and couple the processes of cohesion and DNA replication to ensure that only sister chromatids become paired together. In contrast to the structural cohesins, the deposition and establishment factors are required only during S phase. Acts by acetylating the cohesin complex component SMC3. In Debaryomyces hansenii (strain ATCC 36239 / CBS 767 / BCRC 21394 / JCM 1990 / NBRC 0083 / IGC 2968) (Yeast), this protein is N-acetyltransferase ECO1 (ECO1).